Reading from the N-terminus, the 65-residue chain is Large ribosomal subunit protein bL35 (65 aa).

It belongs to the bacterial ribosomal protein bL35 family.

This chain is Large ribosomal subunit protein bL35, found in Rhodospirillum rubrum (strain ATCC 11170 / ATH 1.1.1 / DSM 467 / LMG 4362 / NCIMB 8255 / S1).